A 275-amino-acid chain; its full sequence is Methyltransferase str2 (275 aa).

This sequence belongs to the methyltransferase superfamily. LaeA methyltransferase family.

It participates in mycotoxin biosynthesis. Functionally, methyltransferase; part of the gene cluster that mediates the biosynthesis of strobilurin A, an antifungal polyketide that contains a key beta-methoxyacrylate toxophore that targets the complex III of the mitochondrial electron transport chain. Strobilurin biosynthesis begins with construction of benzoyl CoA by step-wise elimination of ammonia from phenylalanine by the phenylalanine ammonia-lyase str11, oxygenation by str8 and retro-Claisen reaction to form benzoic acid, which is activated to its CoA thiolester benzoyl CoA by the dedicated CoA ligase str10. Benzoyl CoA forms the starter unit for the highly reducing polyketide synthase stpks1 that produces the polyketide prestrobilutin A. The FAD-dependent oxygenase str9 then catalyzes the key oxidative rearrangement responsible for the creation of the beta-methoxyacrylate toxophore. Str9 performs epoxidation of the 2,3 olefin of prestrobilutin A, followed by Meinwald rearrangement to furnish the aldehyde intermediate. Rapid enolization of the aldehyde intermediate would give the beta-methoxyacrylate skeleton and methylations catalyzed by str2 and str3 complete the synthesis and lead to the production of strobilurin A. The short-chain dehydrogenase stl2 and the dehydrogenase str4 play a role in the shunt pathway leading to the production of bolineol. The cluster encodes no obvious halogenase gene that could be involved in production of strobilurin B, nor any obvious dimethylallyl-transferase that could be involved in the production of strobilurin G. It is possible that unknown proteins encoded in, or near, the cluster (such as str1 or stl1) may form new classes of halogenases or dimethylally-transferases, or that the responsible genes are located elsewhere on the genome. Similarly, proteins encoded by str5/str6 hydrolases appear to have no chemical role in the biosynthesis of strobilurin A. Finally, no obvious self-resistance gene is found within the cluster. The protein is Methyltransferase str2 of Strobilurus tenacellus.